Here is a 185-residue protein sequence, read N- to C-terminus: Ribosome-recycling factor (185 aa).

Residues 163 to 185 (LTNEATKKIDAISKDKEKEITEG) form a disordered region. Positions 167–185 (ATKKIDAISKDKEKEITEG) are enriched in basic and acidic residues.

Belongs to the RRF family.

It localises to the cytoplasm. Responsible for the release of ribosomes from messenger RNA at the termination of protein biosynthesis. May increase the efficiency of translation by recycling ribosomes from one round of translation to another. In Latilactobacillus sakei subsp. sakei (strain 23K) (Lactobacillus sakei subsp. sakei), this protein is Ribosome-recycling factor.